Consider the following 365-residue polypeptide: Flagellar P-ring protein (365 aa).

An N-terminal signal peptide occupies residues 1-19 (MIKFLSALILLLVTTAAQA).

Belongs to the FlgI family. In terms of assembly, the basal body constitutes a major portion of the flagellar organelle and consists of four rings (L,P,S, and M) mounted on a central rod.

The protein resides in the periplasm. It is found in the bacterial flagellum basal body. Assembles around the rod to form the L-ring and probably protects the motor/basal body from shearing forces during rotation. This Shigella boydii serotype 4 (strain Sb227) protein is Flagellar P-ring protein.